A 475-amino-acid polypeptide reads, in one-letter code: uncharacterized protein (475 aa).

4Fe-4S ferredoxin-type domains lie at 303–333 and 352–381; these read ASEF…GHGY and YKDF…LSKL. 8 residues coordinate [4Fe-4S] cluster: C312, C315, C318, C322, C362, C365, C368, and C372.

Belongs to the LutB/YkgF family.

This is an uncharacterized protein from Escherichia coli (strain K12).